Here is a 507-residue protein sequence, read N- to C-terminus: GMP synthase [glutamine-hydrolyzing] (507 aa).

The Glutamine amidotransferase type-1 domain occupies 3 to 190 (KILVIDYGSQ…IQGICGLKGS (188 aa)). The Nucleophile role is filled by Cys-77. Catalysis depends on residues His-164 and Glu-166. A GMPS ATP-PPase domain is found at 191-382 (WTLMDFVENK…LGLPREILYR (192 aa)). 218-224 (SGGVDSS) contacts ATP.

In terms of assembly, homodimer.

The catalysed reaction is XMP + L-glutamine + ATP + H2O = GMP + L-glutamate + AMP + diphosphate + 2 H(+). It participates in purine metabolism; GMP biosynthesis; GMP from XMP (L-Gln route): step 1/1. Its function is as follows. Catalyzes the synthesis of GMP from XMP. The sequence is that of GMP synthase [glutamine-hydrolyzing] from Petrotoga mobilis (strain DSM 10674 / SJ95).